The primary structure comprises 374 residues: Guanine nucleotide-binding protein subunit alpha-15 (374 aa).

The G-alpha domain maps to 41–374 (GELKLLLLGP…ARYLDEINLL (334 aa)). The segment at 44-57 (KLLLLGPGESGKST) is G1 motif. GTP-binding positions include 49–56 (GPGESGKS), 183–189 (LRSRMPT), 208–212 (DAGGQ), 277–280 (NKTD), and A346. The Mg(2+) site is built by S56 and T189. The G2 motif stretch occupies residues 181 to 189 (DVLRSRMPT). The segment at 204–213 (LRIVDAGGQK) is G3 motif. The interval 273-280 (ILFLNKTD) is G4 motif. A G5 motif region spans residues 344 to 349 (TCATDT).

The protein belongs to the G-alpha family. G(q) subfamily. In terms of assembly, g proteins are composed of 3 units; alpha, beta and gamma. The alpha chain contains the guanine nucleotide binding site.

Functionally, guanine nucleotide-binding proteins (G proteins) are involved as modulators or transducers in various transmembrane signaling systems. The polypeptide is Guanine nucleotide-binding protein subunit alpha-15 (Gna15) (Rattus norvegicus (Rat)).